The sequence spans 509 residues: Activin receptor type-1 (509 aa).

The N-terminal stretch at 1 to 20 is a signal peptide; that stretch reads MVDGVMILPVLVMIAFPFPS. Residues 21–123 lie on the Extracellular side of the membrane; it reads MEDEKPKVNP…FPGTQNFHLE (103 aa). Residue Asn-102 is glycosylated (N-linked (GlcNAc...) asparagine). A helical transmembrane segment spans residues 124 to 146; that stretch reads VGLIILSVVFAVCLLACLLGVAL. Over 147–509 the chain is Cytoplasmic; the sequence is RKFKRRNQER…NSLDKLKTDC (363 aa). The region spanning 178 to 207 is the GS domain; the sequence is STLADLLDHSCTSGSGSGLPFLVQRTVARQ. One can recognise a Protein kinase domain in the interval 208-502; it reads ITLLECVGKG…KTLTKIDNSL (295 aa). ATP is bound by residues 214-222 and Lys-235; that span reads VGKGRYGEV. Residue Asp-336 is the Proton acceptor of the active site. Position 501 is a phosphoserine (Ser-501).

It belongs to the protein kinase superfamily. TKL Ser/Thr protein kinase family. TGFB receptor subfamily. As to quaternary structure, interacts with FKBP1A. Interacts with FCHO1. Interacts with CLU. Interacts with type II receptors AMHR2 and ACVR2A. Interacts with BMP7. Interacts with BMP9. Interacts with BMP6 (when glycosylated); the interaction may induce HAMP expression. Interacts with TSC22D1/TSC-22. Mg(2+) is required as a cofactor. The cofactor is Mn(2+).

Its subcellular location is the membrane. The enzyme catalyses L-threonyl-[receptor-protein] + ATP = O-phospho-L-threonyl-[receptor-protein] + ADP + H(+). It catalyses the reaction L-seryl-[receptor-protein] + ATP = O-phospho-L-seryl-[receptor-protein] + ADP + H(+). Its function is as follows. Bone morphogenetic protein (BMP) type I receptor that is involved in a wide variety of biological processes, including bone, heart, cartilage, nervous, and reproductive system development and regulation. As a type I receptor, forms heterotetrameric receptor complexes with the type II receptors AMHR2, ACVR2A ors ACVR2B. Upon binding of ligands such as BMP7 or BMP9 to the heteromeric complexes, type II receptors transphosphorylate ACVR1 intracellular domain. In turn, ACVR1 kinase domain is activated and subsequently phosphorylates SMAD1/5/8 proteins that transduce the signal. In addition to its role in mediating BMP pathway-specific signaling, suppresses TGFbeta/activin pathway signaling by interfering with the binding of activin to its type II receptor. Besides canonical SMAD signaling, can activate non-canonical signaling pathways. May promote the expression of HAMP, potentially via its interaction with BMP6. The chain is Activin receptor type-1 (ACVR1) from Bos taurus (Bovine).